The sequence spans 383 residues: Dimethylsulfoniopropionate lyase 6 (383 aa).

This sequence belongs to the aspartate/glutamate racemases family. ALMA1 subfamily. Homotetramer.

It catalyses the reaction S,S-dimethyl-beta-propiothetin = acrylate + dimethyl sulfide + H(+). Mediates cleavage of dimethylsulfoniopropionate (DMSP) into dimethyl sulfide (DMS) and acrylate. DMS is the principal form by which sulfur is transported from oceans to the atmosphere and is a key component of the ocean sulfur cycle. This is Dimethylsulfoniopropionate lyase 6 from Emiliania huxleyi (strain CCMP1516).